Here is a 416-residue protein sequence, read N- to C-terminus: Homeobox protein ceh-62 (416 aa).

The span at 103–113 (TPTPIIATPSI) shows a compositional bias: low complexity. Disordered regions lie at residues 103-144 (TPTP…QATR) and 178-247 (FQNR…FPPT). The segment covering 118 to 127 (QPLQSPSAPN) has biased composition (polar residues). A DNA-binding region (homeobox) is located at residues 130–189 (SRRKRTTFSPEQATRLEAEYIGDSYMAREKRHLLAQSLKLSENQVKTWFQNRRAKDKRDR). Low complexity predominate over residues 193-218 (NASNHTSNSRRSSPSRKSSSDSTPTP). Positions 219 to 240 (TQATQFDMPTQIQTASPPTTAD) are enriched in polar residues.

Its subcellular location is the nucleus. This Caenorhabditis elegans protein is Homeobox protein ceh-62.